The following is a 112-amino-acid chain: Nitrogenase-stabilizing/protective protein NifW (112 aa).

The protein belongs to the NifW family. In terms of assembly, homotrimer; associates with NifD.

In terms of biological role, may protect the nitrogenase Fe-Mo protein from oxidative damage. This chain is Nitrogenase-stabilizing/protective protein NifW, found in Rhodopseudomonas palustris (strain BisA53).